A 513-amino-acid polypeptide reads, in one-letter code: Ankyrin repeat domain-containing protein 13C-B (513 aa).

The segment covering 1 to 19 (MTGEKIRSLHRDQKPSKDE) has biased composition (basic and acidic residues). Disordered regions lie at residues 1 to 34 (MTGE…DGTF) and 55 to 77 (PSNP…PMTP). The segment covering 20 to 29 (DLLEPDEEAT) has biased composition (acidic residues). 3 ANK repeats span residues 83 to 114 (DVYF…QKDN), 115 to 144 (HGNT…PVKV), and 148 to 177 (QGWS…QQSR).

Its subcellular location is the endoplasmic reticulum membrane. Its function is as follows. Acts as a molecular chaperone for G protein-coupled receptors, regulating their biogenesis and exit from the ER. The protein is Ankyrin repeat domain-containing protein 13C-B (ankrd13c-b) of Xenopus laevis (African clawed frog).